The sequence spans 651 residues: MEKTKDLADLSSLSERKRRDSFGMFDGYDSCSEDTSSSSSSDESEEEVAPLPSSLPIIKNNGQVYTYPDGKSGMATCEMCGMVGVRDAFYSKTKRFCSVSCSRSYSSNSKKASILARLQGKPPTKKAKVLQKKPLVAKLAAYAQYKATLKNQSVNKAPVTVEGFSWGNYITSNNTAAAPVTCFRHAPMGNCWGDIAEGVRVEVPNTDSNLPTKVFWISGIVKLAGFNALLRYEGFENDSSLDFWCNICGPDVHPVGWCATSGKPLVPPQTIQHKYTNWKAFLVKRLTGAKTLPPDFSQKVSESMQYPFKPSMRVEVVDKTHLCRTRVAVVDSVIGGRLRLVYEESEDKTDDFWCHMYSPLIHPIGWSRSIGHRFKRTDILKKQESNYDAPSHLFTKVKDIEQGSEWFKEGMKLEAIDPLNLSAICVATIRKVLADGYLMIGIDGSEAADGSDWFCYHASSPSIFPVGFCEINKIELTPPRGYTKLPFKWFDYLRETGSIAAPVKLFNKEVPNHGFRVGMKLEAVDLMEPRLVCVATVTRIIHRLLRIHFDGWEDEYDQWVDCESSDLYPVGWCQLTGYQLQPPAPQSNKDSQSNISKQKKKSKSQPYKGHKKITALQLKDEMLDGDDYTFLQGASDQESNGSGSYYIKQEP.

The tract at residues 21–55 is disordered; that stretch reads SFGMFDGYDSCSEDTSSSSSSDESEEEVAPLPSSL. The span at 29–41 shows a compositional bias: low complexity; that stretch reads DSCSEDTSSSSSS. The FCS-type zinc-finger motif lies at 68-103; sequence PDGKSGMATCEMCGMVGVRDAFYSKTKRFCSVSCSR. Positions 77, 80, 97, and 101 each coordinate Zn(2+). MBT repeat units follow at residues 164–268, 276–373, 374–479, and 487–583; these read FSWG…LVPP, TNWK…IGHR, FKRT…LTPP, and FKWF…LQPP. Disordered regions lie at residues 581 to 610 and 629 to 651; these read QPPA…YKGH and TFLQ…KQEP. The span at 586–596 shows a compositional bias: low complexity; that stretch reads QSNKDSQSNIS. Basic residues predominate over residues 597–610; the sequence is KQKKKSKSQPYKGH. Positions 632–643 are enriched in polar residues; the sequence is QGASDQESNGSG.

Monomer. Component of the NuA4 histone acetyltransferase complex.

The protein localises to the nucleus. Its subcellular location is the chromosome. Its function is as follows. Chromatin reader component of the NuA4 histone acetyltransferase complex, a multiprotein complex involved in transcriptional activation of select genes principally by acetylation of nucleosomal histones H4 and H2A. The NuA4 complex plays a direct role in repair of DNA double-strand breaks (DSBs) by promoting homologous recombination (HR). MBTD1 specifically recognizes and binds monomethylated and dimethylated 'Lys-20' on histone H4 (H4K20me1 and H4K20me2, respectively). In the NuA4 complex, MBTD1 promotes recruitment of the complex to H4K20me marks by competing with TP53BP1 for binding to H4K20me. Following recruitment to H4K20me at DNA breaks, the NuA4 complex catalyzes acetylation of 'Lys-15' on histone H2A (H2AK15), blocking the ubiquitination mark required for TP53BP1 localization at DNA breaks, thereby promoting homologous recombination (HR). This chain is MBT domain-containing protein 1, found in Xenopus tropicalis (Western clawed frog).